Reading from the N-terminus, the 739-residue chain is Xylosyl- and glucuronyltransferase LARGE2s (739 aa).

At 1–10 (MLCSWRVKLK) the chain is on the cytoplasmic side. The chain crosses the membrane as a helical; Signal-anchor for type II membrane protein span at residues 11–31 (LLLATITLAVLLSWLYLFVGS). The Lumenal portion of the chain corresponds to 32–739 (LEYGRFLLLP…LKYLTAERNL (708 aa)). Positions 80-105 (AEGSDGNPQWAASAEDGPPLGGERNN) are disordered. N-linked (GlcNAc...) asparagine glycosylation is found at Asn-105, Asn-131, and Asn-217. The interval 121-396 (LHVAIVCAGH…FLEYDGNLLR (276 aa)) is xylosyltransferase activity. Mn(2+) is bound by residues Asp-225 and Asp-227. A glycan (N-linked (GlcNAc...) asparagine) is linked at Asn-255. Residues 397–739 (RELFGCASLP…LKYLTAERNL (343 aa)) form a glucuronyltransferase activity region. Residues Asp-546 and Asp-548 each contribute to the Mn(2+) site.

This sequence in the C-terminal section; belongs to the glycosyltransferase 49 family. It in the N-terminal section; belongs to the glycosyltransferase 8 family. Mn(2+) is required as a cofactor.

The protein resides in the golgi apparatus membrane. The enzyme catalyses 3-O-[beta-D-GlcA-(1-&gt;3)-beta-D-Xyl-(1-&gt;4)-Rib-ol-P-Rib-ol-P-3-beta-D-GalNAc-(1-&gt;3)-beta-D-GlcNAc-(1-&gt;4)-(O-6-P-alpha-D-Man)]-Thr-[protein] + UDP-alpha-D-xylose = 3-O-[alpha-D-Xyl-(1-&gt;3)-beta-D-GlcA-(1-&gt;4)-beta-D-Xyl-(1-&gt;4)-Rib-ol-P-Rib-ol-P-3-beta-D-GalNAc-(1-&gt;3)-beta-D-GlcNAc-(1-&gt;4)-(O-6-P-alpha-D-Man)]-Thr-[protein] + UDP + H(+). The catalysed reaction is 3-O-{(1-&gt;[3)-alpha-D-Xyl-(1-&gt;3)-beta-D-GlcA-(1-&gt;](n)-4)-beta-D-Xyl-(1-&gt;4)-Rib-ol-P-Rib-ol-P-3-beta-D-GalNAc-(1-&gt;3)-beta-D-GlcNAc-(1-&gt;4)-O-6-P-alpha-D-Man}-L-Thr-[protein] + UDP-alpha-D-glucuronate = 3-O-{beta-D-GlcA-(1-&gt;[3)-alpha-D-Xyl-(1-&gt;3)-beta-D-GlcA-(1-&gt;](n)-4)-beta-D-Xyl-(1-&gt;4)-Rib-ol-P-Rib-ol-P-3-beta-D-GalNAc-(1-&gt;3)-beta-D-GlcNAc-(1-&gt;4)-O-6-P-alpha-D-Man}-L-Thr-[protein] + UDP + H(+). It catalyses the reaction 3-O-{beta-D-GlcA-(1-&gt;[3)-alpha-D-Xyl-(1-&gt;3)-beta-D-GlcA-(1-&gt;](n)-4)-beta-D-Xyl-(1-&gt;4)-Rib-ol-P-Rib-ol-P-3-beta-D-GalNAc-(1-&gt;3)-beta-D-GlcNAc-(1-&gt;4)-O-6-P-alpha-D-Man}-L-Thr-[protein] + UDP-alpha-D-xylose = 3-O-{(1-&gt;[3)-alpha-D-Xyl-(1-&gt;3)-beta-D-GlcA-(1-&gt;](n+1)-4)-beta-D-Xyl-(1-&gt;4)-Rib-ol-P-Rib-ol-P-3-beta-D-GalNAc-(1-&gt;3)-beta-D-GlcNAc-(1-&gt;4)-O-6-P-alpha-D-Man}-L-Thr-[protein] + UDP + H(+). Its pathway is protein modification; protein glycosylation. In terms of biological role, bifunctional glycosyltransferase with both alpha-1,3-xylosyltransferase and beta-1,3-glucuronyltransferase activities involved in the maturation of alpha-dystroglycan (DAG1) by glycosylation leading to DAG1 binding to laminin G-like domain-containing extracellular proteins with high affinity and in a phosphorylated-O-mannosyl trisaccharide dependent manner. Elongates the glucuronyl-beta-1,4-xylose-beta disaccharide primer structure by adding repeating units [-3-Xylose-alpha-1,3-GlcA-beta-1-] to produce a heteropolysaccharide. Supports the maturation of DAG1 more effectively than LARGE1. In addition, can modify both heparan sulfate (HS)- and chondroitin/dermatan sulfate (CS/DS)-proteoglycans (PGs), namely GPC4, with a glycosaminoglycan (GAG)-like polysaccharide composed of xylose and glucuronic acid to confer laminin binding. The chain is Xylosyl- and glucuronyltransferase LARGE2s from Gallus gallus (Chicken).